We begin with the raw amino-acid sequence, 484 residues long: ATP synthase subunit beta (484 aa).

162–169 (GGAGVGKT) provides a ligand contact to ATP.

Belongs to the ATPase alpha/beta chains family. As to quaternary structure, F-type ATPases have 2 components, CF(1) - the catalytic core - and CF(0) - the membrane proton channel. CF(1) has five subunits: alpha(3), beta(3), gamma(1), delta(1), epsilon(1). CF(0) has four main subunits: a(1), b(1), b'(1) and c(9-12).

The protein resides in the cellular thylakoid membrane. It catalyses the reaction ATP + H2O + 4 H(+)(in) = ADP + phosphate + 5 H(+)(out). Functionally, produces ATP from ADP in the presence of a proton gradient across the membrane. The catalytic sites are hosted primarily by the beta subunits. The chain is ATP synthase subunit beta from Synechococcus elongatus (strain ATCC 33912 / PCC 7942 / FACHB-805) (Anacystis nidulans R2).